We begin with the raw amino-acid sequence, 501 residues long: Aldehyde dehydrogenase, cytosolic 1 (501 aa).

Residue Ser-2 is modified to N-acetylserine. N6-acetyllysine is present on residues Lys-91 and Lys-128. Gly-246–Gly-251 contacts NAD(+). Lys-252 carries the N6-acetyllysine modification. Catalysis depends on Glu-269, which acts as the Proton acceptor. Cys-303 acts as the Nucleophile in catalysis. N6-acetyllysine is present on residues Lys-353, Lys-367, and Lys-410. Ser-413 carries the phosphoserine modification. Lys-419 and Lys-435 each carry N6-acetyllysine.

The protein belongs to the aldehyde dehydrogenase family. As to quaternary structure, homotetramer. In terms of tissue distribution, highest level in liver, high level in lung, low level in kidney and testis.

It is found in the cytoplasm. It carries out the reaction an aldehyde + NAD(+) + H2O = a carboxylate + NADH + 2 H(+). The protein operates within alcohol metabolism; ethanol degradation; acetate from ethanol: step 2/2. Functionally, can oxidize benzaldehyde, propionaldehyde and acetaldehyde. No detectable activity with retinal. This is Aldehyde dehydrogenase, cytosolic 1 from Mus musculus (Mouse).